Here is a 407-residue protein sequence, read N- to C-terminus: Tyrosine--tRNA ligase (407 aa).

L-tyrosine is bound at residue tyrosine 35. A 'HIGH' region motif is present at residues 40–49 (PTADSLHVGH). Residues tyrosine 168 and glutamine 172 each contribute to the L-tyrosine site. The 'KMSKS' region motif lies at 228–232 (KMGKT). Residue lysine 231 participates in ATP binding. In terms of domain architecture, S4 RNA-binding spans 341 to 405 (NSLVDLLAKC…RGKKNFNRIV (65 aa)).

Belongs to the class-I aminoacyl-tRNA synthetase family. TyrS type 1 subfamily. In terms of assembly, homodimer.

The protein resides in the cytoplasm. The catalysed reaction is tRNA(Tyr) + L-tyrosine + ATP = L-tyrosyl-tRNA(Tyr) + AMP + diphosphate + H(+). In terms of biological role, catalyzes the attachment of tyrosine to tRNA(Tyr) in a two-step reaction: tyrosine is first activated by ATP to form Tyr-AMP and then transferred to the acceptor end of tRNA(Tyr). The protein is Tyrosine--tRNA ligase of Clostridium botulinum (strain Loch Maree / Type A3).